The sequence spans 37 residues: Cytochrome b6-f complex subunit 5 (37 aa).

The chain crosses the membrane as a helical span at residues 5–25 (LLDGLVLGLVFATLGGLFYAA).

It belongs to the PetG family. As to quaternary structure, the 4 large subunits of the cytochrome b6-f complex are cytochrome b6, subunit IV (17 kDa polypeptide, PetD), cytochrome f and the Rieske protein, while the 4 small subunits are PetG, PetL, PetM and PetN. The complex functions as a dimer.

The protein resides in the cellular thylakoid membrane. Component of the cytochrome b6-f complex, which mediates electron transfer between photosystem II (PSII) and photosystem I (PSI), cyclic electron flow around PSI, and state transitions. PetG is required for either the stability or assembly of the cytochrome b6-f complex. This Mastigocladus laminosus (Fischerella sp.) protein is Cytochrome b6-f complex subunit 5.